The chain runs to 348 residues: Phospho-2-dehydro-3-deoxyheptonate aldolase, Trp-sensitive (348 aa).

It belongs to the class-I DAHP synthase family.

The catalysed reaction is D-erythrose 4-phosphate + phosphoenolpyruvate + H2O = 7-phospho-2-dehydro-3-deoxy-D-arabino-heptonate + phosphate. It functions in the pathway metabolic intermediate biosynthesis; chorismate biosynthesis; chorismate from D-erythrose 4-phosphate and phosphoenolpyruvate: step 1/7. Functionally, stereospecific condensation of phosphoenolpyruvate (PEP) and D-erythrose-4-phosphate (E4P) giving rise to 3-deoxy-D-arabino-heptulosonate-7-phosphate (DAHP). The polypeptide is Phospho-2-dehydro-3-deoxyheptonate aldolase, Trp-sensitive (aroH) (Buchnera aphidicola subsp. Acyrthosiphon pisum (strain APS) (Acyrthosiphon pisum symbiotic bacterium)).